The chain runs to 370 residues: D-aspartate oxidase (370 aa).

Positions 15, 49, 50, 54, 166, 317, 346, and 348 each coordinate FAD. The Microbody targeting signal signature appears at 368–370 (ARL).

It belongs to the DAMOX/DASOX family. In terms of assembly, homotetramer. FAD is required as a cofactor.

It is found in the peroxisome matrix. The catalysed reaction is D-aspartate + O2 + H2O = oxaloacetate + H2O2 + NH4(+). The enzyme catalyses D-glutamate + O2 + H2O = H2O2 + 2-oxoglutarate + NH4(+). With respect to regulation, inhibited by malonate and D-malate. Very mildly inhibited by benzoate, ethylenediaminetetraacetic acid (EDTA), crotonate and anthranilate. May be very mildly inhibited by meso-tartrate. In terms of biological role, selectively catalyzes the oxidative deamination of acidic amino acids. Protects the organism from the toxicity of D-amino acids. Enables the organism to utilize D-amino acids as a source of nutrients. Enables the organism to utilize D-aspartate as a source of nitrogen and carbon. This Vanrija humicola (Yeast) protein is D-aspartate oxidase.